Here is a 675-residue protein sequence, read N- to C-terminus: Probable metal-nicotianamine transporter YSL16 (675 aa).

The span at 1-11 (MDRHALGGGGA) shows a compositional bias: gly residues. A disordered region spans residues 1–20 (MDRHALGGGGALEIEKTPEA). The next 14 helical transmembrane spans lie at 50–70 (GMVAALLIGVVYTVIVMKLSL), 73–93 (GLIPTLNVSAALLAFLALRGW), 118–138 (CAVACYTIGYGGGFGSFLLGL), 162–182 (GIGWMTGFLLSTSFVGLLTLL), 231–251 (ISFLWSFFQWFYTGGDVCGFL), 283–303 (LVNLSLLFGAILSWGIMWPLI), 329–349 (FICIALLVGDGFYNFVKVIVV), 393–413 (MAYTGYTLLSVIAVVLIPVMF), 421–441 (VIIAYLLAPALGFCNAYGTGL), 453–473 (IALFIFAAWAGKDDGVVAGLV), 507–527 (VGQVVGTLMGCVVAPLTFFLF), 567–587 (LQLCAGFFAFAVLANLARDFL), 605–625 (FLVGASFAIDMCAGSLVVFLW), and 633–653 (AALLVPAVASGLICGDGIWTF).

The protein belongs to the YSL (TC 2.A.67.2) family. As to expression, expressed in roots.

The protein resides in the membrane. Its function is as follows. May be involved in the transport of nicotianamine-chelated metals. The sequence is that of Probable metal-nicotianamine transporter YSL16 (YSL16) from Oryza sativa subsp. japonica (Rice).